The sequence spans 309 residues: Probable manganese-dependent inorganic pyrophosphatase (309 aa).

6 residues coordinate Mn(2+): His-9, Asp-13, Asp-15, Asp-75, His-97, and Asp-149.

It belongs to the PPase class C family. The cofactor is Mn(2+).

The protein resides in the cytoplasm. The enzyme catalyses diphosphate + H2O = 2 phosphate + H(+). The polypeptide is Probable manganese-dependent inorganic pyrophosphatase (Staphylococcus aureus (strain COL)).